Reading from the N-terminus, the 56-residue chain is GSICLEPKVVGPCTAYFPRFYFNSETGKCTPFIYGGCEGNGNNFETLRACRGICRA.

Residues 4–54 (CLEPKVVGPCTAYFPRFYFNSETGKCTPFIYGGCEGNGNNFETLRACRGIC) enclose the BPTI/Kunitz inhibitor domain. 3 disulfides stabilise this stretch: Cys-4–Cys-54, Cys-13–Cys-37, and Cys-29–Cys-50.

It belongs to the venom Kunitz-type family. Sea anemone type 2 potassium channel toxin subfamily.

It is found in the secreted. The protein resides in the nematocyst. Functionally, this protease inhibitor shows two different activities, it inhibits both the capsaicin receptor TRPV1 and serine proteases. It partially blocks the capsaicin- and acid-induced response of TRPV1, a receptor of the pain pathway. It also weakly inhibits trypsin and chymotrypsin activity (Ki=0.5 uM and Ki=7 uM, respectively). In addition, it may also alter tachykinin levels by suppressing endogenous proteases. In vivo, it shows antinociceptive and analgesic activities. It significantly prolongs paw withdrawal latency and blocks heat-induced and chemical-induced acute pain. In addition, it also shows anti-inflammatory and analgesic effects in models of osteoarthritis and rheumatoid arthritis. In vivo, unlike other TRPV1 antagonists whose activity is associated with hyperthermia, this protein has the remarkable feature of dropping core body temperature. The sequence is that of TauPI-stichotoxin-Hcr2d from Radianthus crispa (Leathery sea anemone).